The following is a 314-amino-acid chain: Acetyl-coenzyme A carboxylase carboxyl transferase subunit alpha (314 aa).

Positions 32–289 (EIDMLEASLK…KKMFLKHLNE (258 aa)) constitute a CoA carboxyltransferase C-terminal domain.

This sequence belongs to the AccA family. In terms of assembly, acetyl-CoA carboxylase is a heterohexamer composed of biotin carboxyl carrier protein (AccB), biotin carboxylase (AccC) and two subunits each of ACCase subunit alpha (AccA) and ACCase subunit beta (AccD).

The protein localises to the cytoplasm. It carries out the reaction N(6)-carboxybiotinyl-L-lysyl-[protein] + acetyl-CoA = N(6)-biotinyl-L-lysyl-[protein] + malonyl-CoA. It participates in lipid metabolism; malonyl-CoA biosynthesis; malonyl-CoA from acetyl-CoA: step 1/1. In terms of biological role, component of the acetyl coenzyme A carboxylase (ACC) complex. First, biotin carboxylase catalyzes the carboxylation of biotin on its carrier protein (BCCP) and then the CO(2) group is transferred by the carboxyltransferase to acetyl-CoA to form malonyl-CoA. This chain is Acetyl-coenzyme A carboxylase carboxyl transferase subunit alpha, found in Staphylococcus epidermidis (strain ATCC 35984 / DSM 28319 / BCRC 17069 / CCUG 31568 / BM 3577 / RP62A).